A 221-amino-acid polypeptide reads, in one-letter code: Phosphatidylserine decarboxylase proenzyme (221 aa).

Serine 189 (schiff-base intermediate with substrate; via pyruvic acid) is an active-site residue. Serine 189 carries the pyruvic acid (Ser); by autocatalysis modification.

Belongs to the phosphatidylserine decarboxylase family. PSD-A subfamily. In terms of assembly, heterodimer of a large membrane-associated beta subunit and a small pyruvoyl-containing alpha subunit. It depends on pyruvate as a cofactor. Post-translationally, is synthesized initially as an inactive proenzyme. Formation of the active enzyme involves a self-maturation process in which the active site pyruvoyl group is generated from an internal serine residue via an autocatalytic post-translational modification. Two non-identical subunits are generated from the proenzyme in this reaction, and the pyruvate is formed at the N-terminus of the alpha chain, which is derived from the carboxyl end of the proenzyme. The post-translation cleavage follows an unusual pathway, termed non-hydrolytic serinolysis, in which the side chain hydroxyl group of the serine supplies its oxygen atom to form the C-terminus of the beta chain, while the remainder of the serine residue undergoes an oxidative deamination to produce ammonia and the pyruvoyl prosthetic group on the alpha chain.

Its subcellular location is the cell membrane. It carries out the reaction a 1,2-diacyl-sn-glycero-3-phospho-L-serine + H(+) = a 1,2-diacyl-sn-glycero-3-phosphoethanolamine + CO2. The protein operates within phospholipid metabolism; phosphatidylethanolamine biosynthesis; phosphatidylethanolamine from CDP-diacylglycerol: step 2/2. Catalyzes the formation of phosphatidylethanolamine (PtdEtn) from phosphatidylserine (PtdSer). The chain is Phosphatidylserine decarboxylase proenzyme from Porphyromonas gingivalis (strain ATCC 33277 / DSM 20709 / CIP 103683 / JCM 12257 / NCTC 11834 / 2561).